Here is a 489-residue protein sequence, read N- to C-terminus: Bifunctional protein HldE (489 aa).

Positions 1 to 328 (METENIHSFD…ELKAQLQDQP (328 aa)) are ribokinase. 206 to 209 (NKKE) is a binding site for ATP. The active site involves Asp276. The interval 357 to 489 (LTNGCFDLLH…IIQDIRNGRG (133 aa)) is cytidylyltransferase.

It in the N-terminal section; belongs to the carbohydrate kinase PfkB family. This sequence in the C-terminal section; belongs to the cytidylyltransferase family. As to quaternary structure, homodimer.

It catalyses the reaction D-glycero-beta-D-manno-heptose 7-phosphate + ATP = D-glycero-beta-D-manno-heptose 1,7-bisphosphate + ADP + H(+). The enzyme catalyses D-glycero-beta-D-manno-heptose 1-phosphate + ATP + H(+) = ADP-D-glycero-beta-D-manno-heptose + diphosphate. It functions in the pathway nucleotide-sugar biosynthesis; ADP-L-glycero-beta-D-manno-heptose biosynthesis; ADP-L-glycero-beta-D-manno-heptose from D-glycero-beta-D-manno-heptose 7-phosphate: step 1/4. It participates in nucleotide-sugar biosynthesis; ADP-L-glycero-beta-D-manno-heptose biosynthesis; ADP-L-glycero-beta-D-manno-heptose from D-glycero-beta-D-manno-heptose 7-phosphate: step 3/4. Catalyzes the phosphorylation of D-glycero-D-manno-heptose 7-phosphate at the C-1 position to selectively form D-glycero-beta-D-manno-heptose-1,7-bisphosphate. In terms of biological role, catalyzes the ADP transfer from ATP to D-glycero-beta-D-manno-heptose 1-phosphate, yielding ADP-D-glycero-beta-D-manno-heptose. The polypeptide is Bifunctional protein HldE (Desulfatibacillum aliphaticivorans).